We begin with the raw amino-acid sequence, 169 residues long: Ribosomal RNA large subunit methyltransferase H (169 aa).

S-adenosyl-L-methionine contacts are provided by residues Leu85, Gly117, and Leu136–Trp141.

This sequence belongs to the RNA methyltransferase RlmH family. As to quaternary structure, homodimer.

The protein localises to the cytoplasm. The catalysed reaction is pseudouridine(1915) in 23S rRNA + S-adenosyl-L-methionine = N(3)-methylpseudouridine(1915) in 23S rRNA + S-adenosyl-L-homocysteine + H(+). In terms of biological role, specifically methylates the pseudouridine at position 1915 (m3Psi1915) in 23S rRNA. The chain is Ribosomal RNA large subunit methyltransferase H from Brucella ovis (strain ATCC 25840 / 63/290 / NCTC 10512).